Here is a 210-residue protein sequence, read N- to C-terminus: Orotate phosphoribosyltransferase (210 aa).

5-phospho-alpha-D-ribose 1-diphosphate is bound by residues R97, K98, and 125 to 133 (NDMVSSGKS). Residues S129 and R157 each contribute to the orotate site.

This sequence belongs to the purine/pyrimidine phosphoribosyltransferase family. PyrE subfamily. In terms of assembly, homodimer. The cofactor is Mg(2+).

The enzyme catalyses orotidine 5'-phosphate + diphosphate = orotate + 5-phospho-alpha-D-ribose 1-diphosphate. The protein operates within pyrimidine metabolism; UMP biosynthesis via de novo pathway; UMP from orotate: step 1/2. Its function is as follows. Catalyzes the transfer of a ribosyl phosphate group from 5-phosphoribose 1-diphosphate to orotate, leading to the formation of orotidine monophosphate (OMP). The chain is Orotate phosphoribosyltransferase from Chlamydia pneumoniae (Chlamydophila pneumoniae).